We begin with the raw amino-acid sequence, 1053 residues long: Carbamoyl phosphate synthase large chain (1053 aa).

A carboxyphosphate synthetic domain region spans residues 1–397 (MPKNTSLKKV…GFKKALRSLD (397 aa)). Positions 127, 167, 173, 174, 206, 208, 213, 239, 240, 241, 282, and 294 each coordinate ATP. Residues 131 to 323 (KKLMLEIGEP…IARVAAKVAI (193 aa)) form the ATP-grasp 1 domain. Residues Gln282, Glu294, and Asn296 each contribute to the Mg(2+) site. Mn(2+) contacts are provided by Gln282, Glu294, and Asn296. The interval 398–530 (TDIYRHTDLN…YSTWEQECEL (133 aa)) is oligomerization domain. The carbamoyl phosphate synthetic domain stretch occupies residues 531-919 (TQSDRKKILI…YKASQAADNT (389 aa)). An ATP-grasp 2 domain is found at 661–852 (SVLLDQNNIP…LAKIAAKLML (192 aa)). 10 residues coordinate ATP: Arg697, Arg736, Leu738, Glu743, Gly768, Val769, His770, Ser771, Gln811, and Glu823. Gln811, Glu823, and Asn825 together coordinate Mg(2+). 3 residues coordinate Mn(2+): Gln811, Glu823, and Asn825. In terms of domain architecture, MGS-like spans 918–1053 (NTIPLKGNVF…TVEPLSHYHS (136 aa)). The segment at 920 to 1053 (IPLKGNVFIS…TVEPLSHYHS (134 aa)) is allosteric domain.

This sequence belongs to the CarB family. In terms of assembly, composed of two chains; the small (or glutamine) chain promotes the hydrolysis of glutamine to ammonia, which is used by the large (or ammonia) chain to synthesize carbamoyl phosphate. Tetramer of heterodimers (alpha,beta)4. Requires Mg(2+) as cofactor. Mn(2+) serves as cofactor.

It carries out the reaction hydrogencarbonate + L-glutamine + 2 ATP + H2O = carbamoyl phosphate + L-glutamate + 2 ADP + phosphate + 2 H(+). It catalyses the reaction hydrogencarbonate + NH4(+) + 2 ATP = carbamoyl phosphate + 2 ADP + phosphate + 2 H(+). Its pathway is amino-acid biosynthesis; L-arginine biosynthesis; carbamoyl phosphate from bicarbonate: step 1/1. It participates in pyrimidine metabolism; UMP biosynthesis via de novo pathway; (S)-dihydroorotate from bicarbonate: step 1/3. Its function is as follows. Large subunit of the glutamine-dependent carbamoyl phosphate synthetase (CPSase). CPSase catalyzes the formation of carbamoyl phosphate from the ammonia moiety of glutamine, carbonate, and phosphate donated by ATP, constituting the first step of 2 biosynthetic pathways, one leading to arginine and/or urea and the other to pyrimidine nucleotides. The large subunit (synthetase) binds the substrates ammonia (free or transferred from glutamine from the small subunit), hydrogencarbonate and ATP and carries out an ATP-coupled ligase reaction, activating hydrogencarbonate by forming carboxy phosphate which reacts with ammonia to form carbamoyl phosphate. This Methanocorpusculum labreanum (strain ATCC 43576 / DSM 4855 / Z) protein is Carbamoyl phosphate synthase large chain.